The chain runs to 282 residues: Bifunctional protein FolD (282 aa).

Residues 165–167 and isoleucine 231 contribute to the NADP(+) site; that span reads GAS.

This sequence belongs to the tetrahydrofolate dehydrogenase/cyclohydrolase family. Homodimer.

It catalyses the reaction (6R)-5,10-methylene-5,6,7,8-tetrahydrofolate + NADP(+) = (6R)-5,10-methenyltetrahydrofolate + NADPH. The enzyme catalyses (6R)-5,10-methenyltetrahydrofolate + H2O = (6R)-10-formyltetrahydrofolate + H(+). Its pathway is one-carbon metabolism; tetrahydrofolate interconversion. In terms of biological role, catalyzes the oxidation of 5,10-methylenetetrahydrofolate to 5,10-methenyltetrahydrofolate and then the hydrolysis of 5,10-methenyltetrahydrofolate to 10-formyltetrahydrofolate. This Francisella philomiragia subsp. philomiragia (strain ATCC 25017 / CCUG 19701 / FSC 153 / O#319-036) protein is Bifunctional protein FolD.